The primary structure comprises 947 residues: Protocadherin alpha-4 (947 aa).

The first 29 residues, 1–29 (MEFSWGSGQESRRLLLLLLLLSAWEAGNG), serve as a signal peptide directing secretion. Cadherin domains are found at residues 30–133 (QLHY…PPVF), 134–242 (PATQ…APAF), 243–350 (DRTI…VPDL), 351–455 (EFKS…APAF), 456–565 (AQPE…APAL), and 588–678 (DHVV…APKA). At 30-697 (QLHYSVSEEA…GPDAALVDVN (668 aa)) the chain is on the extracellular side. A disulfide bridge links Cys96 with Cys102. N-linked (GlcNAc...) asparagine glycosylation is found at Asn139, Asn257, and Asn265. N-linked (GlcNAc...) asparagine glycosylation occurs at Asn548. A helical membrane pass occupies residues 698–718 (VYLIIAICAVSSLLVLTLLLY). The Cytoplasmic segment spans residues 719-947 (TALRCSAPPT…GNSTTDNSDQ (229 aa)). 6 PXXP repeats span residues 734-737 (PGKP), 774-777 (PSLP), 796-799 (PRQP), 829-832 (PGGP), 870-873 (PGNP), and 888-891 (PGSP). The tract at residues 734-891 (PGKPTLVCSS…PDKFIIPGSP (158 aa)) is 6 X 4 AA repeats of P-X-X-P. The interval 738-947 (TLVCSSAVGS…GNSTTDNSDQ (210 aa)) is required for interaction with FYN. 2 disordered regions span residues 754–805 (RRPR…DWRY) and 828–853 (GPGG…EVSP). A disordered region spans residues 892–947 (AIISIRQEPANSQIDKSDFITFGKKEETKKKKKKKKGNKTQEKKEKGNSTTDNSDQ). Residues 906-920 (DKSDFITFGKKEETK) are compositionally biased toward basic and acidic residues.

Forms homodimers in trans (molecules expressed by two different cells). Forms promiscuous heterodimers in cis (at the plasma membrane of the same cell) with other protocadherins. Interacts with FYN.

The protein resides in the cell membrane. Functionally, calcium-dependent cell-adhesion protein involved in cells self-recognition and non-self discrimination. Thereby, it is involved in the establishment and maintenance of specific neuronal connections in the brain. The polypeptide is Protocadherin alpha-4 (Pan troglodytes (Chimpanzee)).